Reading from the N-terminus, the 234-residue chain is Synaptogyrin-4 (234 aa).

Positions 18–169 (FLKRPKAITR…QAYLAFQELR (152 aa)) constitute an MARVEL domain. Transmembrane regions (helical) follow at residues 25–45 (ITRIFAGVFSLIVFSSLLTDG), 66–86 (CSIAVGAGLLAFLSSLAFLAL), 104–124 (LLDLILAVIWAGVWAVGFCFL), and 145–165 (AAITFSFFSILVWIFQAYLAF). Residues 191 to 226 (SPPSAASPVNTPTTGPHGPSYASSSLSPYLSTPKAP) are disordered. The span at 209–221 (PSYASSSLSPYLS) shows a compositional bias: low complexity.

The protein belongs to the synaptogyrin family.

The protein resides in the membrane. The sequence is that of Synaptogyrin-4 (SYNGR4) from Bos taurus (Bovine).